The sequence spans 370 residues: tRNA N6-adenosine threonylcarbamoyltransferase (370 aa).

H122 and H126 together coordinate Fe cation. Substrate-binding positions include 153–157 (LLSGG), D186, G199, and N298. D326 provides a ligand contact to Fe cation.

The protein belongs to the KAE1 / TsaD family. Fe(2+) serves as cofactor.

It is found in the cytoplasm. It catalyses the reaction L-threonylcarbamoyladenylate + adenosine(37) in tRNA = N(6)-L-threonylcarbamoyladenosine(37) in tRNA + AMP + H(+). In terms of biological role, required for the formation of a threonylcarbamoyl group on adenosine at position 37 (t(6)A37) in tRNAs that read codons beginning with adenine. Is involved in the transfer of the threonylcarbamoyl moiety of threonylcarbamoyl-AMP (TC-AMP) to the N6 group of A37, together with TsaE and TsaB. TsaD likely plays a direct catalytic role in this reaction. The sequence is that of tRNA N6-adenosine threonylcarbamoyltransferase from Granulibacter bethesdensis (strain ATCC BAA-1260 / CGDNIH1).